We begin with the raw amino-acid sequence, 248 residues long: Tyrosine recombinase XerD-like (248 aa).

A Core-binding (CB) domain is found at 1–72 (MIAFIEPFLA…TVNQFLYYLY (72 aa)). Positions 92–248 (SLKPQLTRLD…PITLEKYYKM (157 aa)) constitute a Tyr recombinase domain. Arginine 213 is a catalytic residue. Residue tyrosine 245 is the O-(3'-phospho-DNA)-tyrosine intermediate of the active site.

Belongs to the 'phage' integrase family. XerD-like subfamily.

It is found in the cytoplasm. In terms of biological role, putative tyrosine recombinase. Not involved in the cutting and rejoining of the recombining DNA molecules on dif(SL) site. The polypeptide is Tyrosine recombinase XerD-like (Streptococcus equi subsp. zooepidemicus (strain H70)).